A 516-amino-acid polypeptide reads, in one-letter code: UDP-N-acetylmuramyl-tripeptide synthetase (516 aa).

Ser-36 contacts UDP-N-acetyl-alpha-D-muramoyl-L-alanyl-D-glutamate. 113–119 (GTKGKTT) provides a ligand contact to ATP. Residues 159-160 (TT), Ser-186, and Arg-194 each bind UDP-N-acetyl-alpha-D-muramoyl-L-alanyl-D-glutamate. Lys-228 carries the post-translational modification N6-carboxylysine.

This sequence belongs to the MurCDEF family. MurE subfamily. Post-translationally, carboxylation is probably crucial for Mg(2+) binding and, consequently, for the gamma-phosphate positioning of ATP.

It localises to the cytoplasm. Its pathway is cell wall biogenesis; peptidoglycan biosynthesis. Its function is as follows. Catalyzes the addition of an amino acid to the nucleotide precursor UDP-N-acetylmuramoyl-L-alanyl-D-glutamate (UMAG) in the biosynthesis of bacterial cell-wall peptidoglycan. The protein is UDP-N-acetylmuramyl-tripeptide synthetase of Limosilactobacillus reuteri (strain DSM 20016) (Lactobacillus reuteri).